The chain runs to 165 residues: 3-isopropylmalate dehydratase small subunit (165 aa).

Belongs to the LeuD family. LeuD type 2 subfamily. Heterodimer of LeuC and LeuD.

The enzyme catalyses (2R,3S)-3-isopropylmalate = (2S)-2-isopropylmalate. It functions in the pathway amino-acid biosynthesis; L-leucine biosynthesis; L-leucine from 3-methyl-2-oxobutanoate: step 2/4. Catalyzes the isomerization between 2-isopropylmalate and 3-isopropylmalate, via the formation of 2-isopropylmaleate. The protein is 3-isopropylmalate dehydratase small subunit of Halothermothrix orenii (strain H 168 / OCM 544 / DSM 9562).